Reading from the N-terminus, the 172-residue chain is MKQQLLLLEDVEGLGRSGDIVTARPGYVRNYLLPKQKAVIAGAGTLRLQAKLKEERLLRAAADREESEKLAQILKDIVLEFQVRVDPDNNMYGSVTVSDIIAEAAKKNIVLTRKNFPHAHYAIKNLGKKSVPLKLKEDVTATLIVEVSSESSYVAVLNPQPSQEQTAAEELN.

It belongs to the bacterial ribosomal protein bL9 family.

Functionally, binds to the 23S rRNA. This Chlamydia abortus (strain DSM 27085 / S26/3) (Chlamydophila abortus) protein is Large ribosomal subunit protein bL9.